Consider the following 527-residue polypeptide: Peptide chain release factor 3 (527 aa).

In terms of domain architecture, tr-type G spans 9 to 277; the sequence is AKRRTFAIIS…AVVDWAPRPL (269 aa). GTP contacts are provided by residues 18 to 25, 86 to 90, and 140 to 143; these read SHPDAGKT, DTPGH, and NKLD.

Belongs to the TRAFAC class translation factor GTPase superfamily. Classic translation factor GTPase family. PrfC subfamily.

It localises to the cytoplasm. In terms of biological role, increases the formation of ribosomal termination complexes and stimulates activities of RF-1 and RF-2. It binds guanine nucleotides and has strong preference for UGA stop codons. It may interact directly with the ribosome. The stimulation of RF-1 and RF-2 is significantly reduced by GTP and GDP, but not by GMP. This chain is Peptide chain release factor 3, found in Pseudomonas fluorescens (strain Pf0-1).